Here is a 382-residue protein sequence, read N- to C-terminus: Sphingoid long-chain base transporter RSB1 (382 aa).

Residues 1 to 34 (MSNATNNTLGSLLPQLEAAANSNSLYGGMVPNLR) are Extracellular-facing. N-linked (GlcNAc...) asparagine glycosylation is found at Asn-3 and Asn-6. The chain crosses the membrane as a helical span at residues 35–55 (FNITMIVIWGILLTIHVVQLL). Over 56–57 (MR) the chain is Cytoplasmic. Residues 58 to 78 (QYWFSIAFICTGILEVLGFIG) traverse the membrane as a helical segment. At 79 to 90 (RTWSHSNVADMD) the chain is on the extracellular side. The chain crosses the membrane as a helical span at residues 91–111 (AFLLNMICLTIAPVFTMGGIY). At 112 to 135 (YQLAKLIEVYGHRFSLLPSPMAYS) the chain is on the cytoplasmic side. Residues 136–156 (FIFICSDIVSLVVQAVGGGLC) form a helical membrane-spanning segment. Over 157 to 171 (GVAVTDGTSTTTGNH) the chain is Extracellular. A helical membrane pass occupies residues 172–192 (VFIAGLAIQVASMAIFLMLWF). The Cytoplasmic segment spans residues 193 to 241 (HFLFRIYISVRWEHINSRPISLSLLKISQTEVDYLYREKFHFLRLEPKR). The chain crosses the membrane as a helical span at residues 242-262 (WVFHYFNLAITVAVLTIFTRC). Residues 263-281 (CYRLAELVVGWDGYLITHE) are Extracellular-facing. Residues 282 to 302 (WYFIILDALMMAIATVTLTIF) form a helical membrane-spanning segment. The Cytoplasmic portion of the chain corresponds to 303–382 (HPGFAFKGKS…LFSSKKKAKL (80 aa)).

The protein belongs to the lipid-translocating exporter (LTE) (TC 9.A.26.1) family.

The protein localises to the cell membrane. Catalyzes the ATP-dependent translocation of sphingoid long-chain bases (LCBs) from the cytoplasmic site toward the extracytoplasmic side of the membrane (flip-flop). Involved in the establishment of the functional lipid asymmetry of the plasma membrane. Regulates intracellular levels of LCBs, sphingolipid precursors that are growth inhibitory at increased levels. This is Sphingoid long-chain base transporter RSB1 (RSB1) from Saccharomyces cerevisiae (strain JAY291) (Baker's yeast).